The following is a 298-amino-acid chain: ATP phosphoribosyltransferase (298 aa).

The protein belongs to the ATP phosphoribosyltransferase family. Long subfamily. It depends on Mg(2+) as a cofactor.

The protein resides in the cytoplasm. The catalysed reaction is 1-(5-phospho-beta-D-ribosyl)-ATP + diphosphate = 5-phospho-alpha-D-ribose 1-diphosphate + ATP. The protein operates within amino-acid biosynthesis; L-histidine biosynthesis; L-histidine from 5-phospho-alpha-D-ribose 1-diphosphate: step 1/9. Its activity is regulated as follows. Feedback inhibited by histidine. In terms of biological role, catalyzes the condensation of ATP and 5-phosphoribose 1-diphosphate to form N'-(5'-phosphoribosyl)-ATP (PR-ATP). Has a crucial role in the pathway because the rate of histidine biosynthesis seems to be controlled primarily by regulation of HisG enzymatic activity. This chain is ATP phosphoribosyltransferase, found in Tolumonas auensis (strain DSM 9187 / NBRC 110442 / TA 4).